We begin with the raw amino-acid sequence, 514 residues long: Endoglucanase MaCel5A (514 aa).

The N-terminal stretch at 1–23 (MKRILFTAGGCLFYLLLAVKAYA) is a signal peptide. Composition is skewed to low complexity over residues 91–114 (GSSS…SGSG) and 179–201 (SSSS…SSSG). Disordered regions lie at residues 91 to 118 (GSSS…SSSG) and 179 to 208 (SSSS…GGDS). Glu-346 serves as the catalytic Proton donor. The Nucleophile role is filled by Glu-439.

This sequence belongs to the glycosyl hydrolase 5 (cellulase A) family.

The enzyme catalyses Endohydrolysis of (1-&gt;4)-beta-D-glucosidic linkages in cellulose, lichenin and cereal beta-D-glucans.. With respect to regulation, exhibits strong halostability and halotolerance. The activity increases about tenfold in the presence of 0.5 M NaCl, and about fivefold in the presence of 4.0 M NaCl. Tolerates detergents, but activity is decreased in the presence of EDTA. Activity is enhanced in the presence of Mn(2+), Ca(2+), Ba(2+) or Mg(2+), and decreased in the presence of Zn(2+), Cu(2+), Al(3+) or Fe(3+). Functionally, endoglucanase that exhibits highest activity toward barley beta-glucan, lower activity toward carboxymethyl cellulose (CMC-Na), and marginal activity toward laminarin and xylan. This is Endoglucanase MaCel5A from Microbulbifer sp. (strain ALW1).